A 105-amino-acid polypeptide reads, in one-letter code: Photosystem II 5 kDa protein, chloroplastic (105 aa).

A chloroplast-targeting transit peptide spans 1–77; the sequence is MASITMTTSF…ICSVAGVATA (77 aa).

The maturation of the PSII-T precursor to its final form occurs through a two step process. First, a stromal intermediate is formed, which, upon translocation into the thylakoid membrane, is processed to the mature protein.

It localises to the plastid. It is found in the chloroplast thylakoid membrane. Its function is as follows. May be a component of the oxygen-evolving complex. This is Photosystem II 5 kDa protein, chloroplastic (PSBT) from Gossypium hirsutum (Upland cotton).